Here is a 251-residue protein sequence, read N- to C-terminus: Imidazole glycerol phosphate synthase subunit HisF (251 aa).

Residues Asp-11 and Asp-130 contribute to the active site.

This sequence belongs to the HisA/HisF family. As to quaternary structure, heterodimer of HisH and HisF.

It is found in the cytoplasm. It catalyses the reaction 5-[(5-phospho-1-deoxy-D-ribulos-1-ylimino)methylamino]-1-(5-phospho-beta-D-ribosyl)imidazole-4-carboxamide + L-glutamine = D-erythro-1-(imidazol-4-yl)glycerol 3-phosphate + 5-amino-1-(5-phospho-beta-D-ribosyl)imidazole-4-carboxamide + L-glutamate + H(+). Its pathway is amino-acid biosynthesis; L-histidine biosynthesis; L-histidine from 5-phospho-alpha-D-ribose 1-diphosphate: step 5/9. Its function is as follows. IGPS catalyzes the conversion of PRFAR and glutamine to IGP, AICAR and glutamate. The HisF subunit catalyzes the cyclization activity that produces IGP and AICAR from PRFAR using the ammonia provided by the HisH subunit. In Flavobacterium johnsoniae (strain ATCC 17061 / DSM 2064 / JCM 8514 / BCRC 14874 / CCUG 350202 / NBRC 14942 / NCIMB 11054 / UW101) (Cytophaga johnsonae), this protein is Imidazole glycerol phosphate synthase subunit HisF.